The primary structure comprises 232 residues: LexA repressor (232 aa).

A DNA-binding region (H-T-H motif) is located at residues 26–46 (FDEMKDALDLRSKSGIHRLIT). Active-site for autocatalytic cleavage activity residues include Ser153 and Lys191.

The protein belongs to the peptidase S24 family. As to quaternary structure, homodimer.

It carries out the reaction Hydrolysis of Ala-|-Gly bond in repressor LexA.. Functionally, represses a number of genes involved in the response to DNA damage (SOS response), including recA and lexA. In the presence of single-stranded DNA, RecA interacts with LexA causing an autocatalytic cleavage which disrupts the DNA-binding part of LexA, leading to derepression of the SOS regulon and eventually DNA repair. The sequence is that of LexA repressor from Bradyrhizobium sp. (strain ORS 278).